The sequence spans 612 residues: Bile salt-activated lipase (612 aa).

The signal sequence occupies residues 1–20; the sequence is MGRLEVLFLGLTCCLAAACA. C84 and C100 are joined by a disulfide. N-linked (GlcNAc...) asparagine glycosylation occurs at N207. S214 functions as the Acyl-ester intermediate in the catalytic mechanism. C266 and C277 are oxidised to a cystine. Catalysis depends on charge relay system residues D340 and H455. The segment at 553-612 is disordered; it reads VGDHTPPEDDSEAAPVPPTDDSQGGPVPPTDDSQTTPVPPTDNSQAGDSVEAQMPGPIGF. Tandem repeats lie at residues 556-566, 567-577, 578-588, and 589-599. Residues 556-599 form a 4 X 11 AA tandem repeats, O-glycosylated region region; it reads HTPPEDDSEAAPVPPTDDSQGGPVPPTDDSQTTPVPPTDNSQAG. Positions 583–599 are enriched in polar residues; it reads DDSQTTPVPPTDNSQAG.

This sequence belongs to the type-B carboxylesterase/lipase family. In terms of assembly, interacts with CLC. Synthesized primarily in the pancreas and then transported to the intestine.

It is found in the secreted. It carries out the reaction a triacylglycerol + H2O = a diacylglycerol + a fatty acid + H(+). The enzyme catalyses 1,2,3-tri-(9Z-octadecenoyl)-glycerol + H2O = di-(9Z)-octadecenoylglycerol + (9Z)-octadecenoate + H(+). It catalyses the reaction 1,2,3-trioctanoylglycerol + H2O = dioctanoylglycerol + octanoate + H(+). The catalysed reaction is a sterol ester + H2O = a sterol + a fatty acid + H(+). It carries out the reaction cholesteryl (9Z-octadecenoate) + H2O = cholesterol + (9Z)-octadecenoate + H(+). The enzyme catalyses an acetyl ester + H2O = an aliphatic alcohol + acetate + H(+). It catalyses the reaction a butanoate ester + H2O = an aliphatic alcohol + butanoate + H(+). The catalysed reaction is 9-hexadecanoyloxy-octadecanoate + H2O = 9-hydroxy-octadecanoate + hexadecanoate + H(+). It carries out the reaction 9-(9Z-octadecenoyloxy)-octadecanoate + H2O = 9-hydroxy-octadecanoate + (9Z)-octadecenoate + H(+). The enzyme catalyses 1-hexadecanoyl-sn-glycero-3-phosphocholine + H2O = sn-glycerol 3-phosphocholine + hexadecanoate + H(+). It catalyses the reaction 12-hexadecanoyloxy-octadecanoate + H2O = 12-hydroxyoctadecanoate + hexadecanoate + H(+). The catalysed reaction is 12-(9Z-octadecenoyloxy)-octadecanoate + H2O = 12-hydroxyoctadecanoate + (9Z)-octadecenoate + H(+). It carries out the reaction 13-(9Z-octadecenoyloxy)-octadecanoate + H2O = 13-hydroxy-octadecanoate + (9Z)-octadecenoate + H(+). The enzyme catalyses 9-(9Z-hexadecenoyloxy)-octadecanoate + H2O = (9Z)-hexadecenoate + 9-hydroxy-octadecanoate + H(+). It catalyses the reaction 12-(9Z-hexadecenoyloxy)-octadecanoate + H2O = 12-hydroxyoctadecanoate + (9Z)-hexadecenoate + H(+). The catalysed reaction is 13-(9Z-hexadecenoyloxy)-octadecanoate + H2O = 13-hydroxy-octadecanoate + (9Z)-hexadecenoate + H(+). It carries out the reaction 12-octadecanoyloxy-octadecanoate + H2O = 12-hydroxyoctadecanoate + octadecanoate + H(+). The enzyme catalyses 13-octadecanoyloxy-octadecanoate + H2O = 13-hydroxy-octadecanoate + octadecanoate + H(+). It catalyses the reaction 5-(9Z-hexadecenoyloxy)-octadecanoate + H2O = 5-hydroxy-octadecanoate + (9Z)-hexadecenoate + H(+). The catalysed reaction is 9-octadecanoyloxy-octadecanoate + H2O = 9-hydroxy-octadecanoate + octadecanoate + H(+). Activated by bile salts such as sodium taurocholate. Catalyzes the hydrolysis of a wide range of substrates including cholesteryl esters, phospholipids, lysophospholipids, di- and tri-acylglycerols, and fatty acid esters of hydroxy fatty acids (FAHFA). Preferentially hydrolyzes FAHFAs with the ester bond further away from the carboxylate. Unsaturated FAHFAs are hydrolyzed more quickly than saturated FAHFAs. Has an essential role in the complete digestion of dietary lipids and their intestinal absorption, along with the absorption of fat-soluble vitamins. This Rattus norvegicus (Rat) protein is Bile salt-activated lipase (Cel).